The primary structure comprises 420 residues: Vasopressin V1a receptor (420 aa).

Residues 1–20 (MSFPRGSYDPAASNSSPWWP) form a disordered region. Over 1-54 (MSFPRGSYDPAASNSSPWWPLSAEDANSSWEAAGHQKGSDPSGDVRNEELAKLE) the chain is Extracellular. Asn-27 carries N-linked (GlcNAc...) asparagine glycosylation. The helical transmembrane segment at 55-75 (IAVLAVIFVVAVLGNSSVLLA) threads the bilayer. The Cytoplasmic segment spans residues 76-92 (LHRTPRKTSRMHLFIRH). Residues 93 to 113 (LSLADLAVAFFQVLPQLCWDI) form a helical membrane-spanning segment. Residues 114 to 125 (TYRFRGPDWLCR) are Extracellular-facing. The cysteines at positions 124 and 205 are disulfide-linked. A helical membrane pass occupies residues 126 to 146 (VVKHLQVFAMFASAYMLVVMT). The Cytoplasmic portion of the chain corresponds to 147–168 (ADRYIAVCHPLKTLQQPTRRSR). The chain crosses the membrane as a helical span at residues 169–189 (LMIAASWVLSFLLSTPQYFIF). The Extracellular segment spans residues 190-225 (SMIEIEVNNGTKTQDCWATFIQPWGTRAYVTWMTSG). Asn-198 carries N-linked (GlcNAc...) asparagine glycosylation. Residues 226–246 (VFVVPVVILGTCYGFICYHIW) form a helical membrane-spanning segment. Residues 247–294 (RNVRGKTASRQSKGSGEDVAPFHKGLLVTPCVSSVKTISRAKIRTVKM) lie on the Cytoplasmic side of the membrane. The helical transmembrane segment at 295–315 (TFVIVTAYILCWAPFFIVQMW) threads the bilayer. At 316–331 (SVWDDNFIWTDSENPS) the chain is on the extracellular side. A helical transmembrane segment spans residues 332–352 (ITITALLASLNSCCNPWIYMF). Topologically, residues 353-420 (FSGHLLQDCV…RSIRFIPVST (68 aa)) are cytoplasmic. 2 S-palmitoyl cysteine lipidation sites follow: Cys-367 and Cys-368. Positions 379–411 (DSDNMSRRHTSYSNNRSPTNSTGTWKDSPKSSR) are disordered. Polar residues predominate over residues 389-403 (SYSNNRSPTNSTGTW). At Ser-406 the chain carries Phosphoserine.

The protein belongs to the G-protein coupled receptor 1 family. Vasopressin/oxytocin receptor subfamily.

It is found in the cell membrane. In terms of biological role, receptor for arginine vasopressin. The activity of this receptor is mediated by G proteins which activate a phosphatidyl-inositol-calcium second messenger system. Involved in social memory formation. The polypeptide is Vasopressin V1a receptor (Avpr1a) (Microtus ochrogaster (Prairie vole)).